The chain runs to 474 residues: Glutamate--tRNA ligase (474 aa).

Residues 10–20 (PSPTGYLHIGG) carry the 'HIGH' region motif. The Zn(2+) site is built by cysteine 107, cysteine 109, cysteine 134, and aspartate 136. The short motif at 244–248 (RLSKR) is the 'KMSKS' region element. Residue lysine 247 coordinates ATP.

Belongs to the class-I aminoacyl-tRNA synthetase family. Glutamate--tRNA ligase type 1 subfamily. In terms of assembly, monomer. It depends on Zn(2+) as a cofactor.

It is found in the cytoplasm. The catalysed reaction is tRNA(Glu) + L-glutamate + ATP = L-glutamyl-tRNA(Glu) + AMP + diphosphate. Catalyzes the attachment of glutamate to tRNA(Glu) in a two-step reaction: glutamate is first activated by ATP to form Glu-AMP and then transferred to the acceptor end of tRNA(Glu). The chain is Glutamate--tRNA ligase from Anaeromyxobacter sp. (strain K).